The chain runs to 883 residues: Glutamate receptor 2 (883 aa).

Residues 1–24 form the signal peptide; that stretch reads MQKIMHISVLLSPILWGLIFGVSS. Residues 25-543 lie on the Extracellular side of the membrane; the sequence is NSIQIGGLFP…GVFSFLDPLA (519 aa). Residues Cys78 and Cys330 are joined by a disulfide bond. Asn256, Asn370, Asn406, and Asn413 each carry an N-linked (GlcNAc...) asparagine glycan. The L-glutamate site is built by Pro499, Thr501, and Arg506. A helical transmembrane segment spans residues 544 to 564; sequence YEIWMCIVFAYIGVSVVLFLV. At 565–591 the chain is on the cytoplasmic side; that stretch reads SRFSPYEWHTEEFEDGRETQSSESTNE. An intramembrane region (helical; Pore-forming) is located at residues 592–607; sequence FGIFNSLWFSLGAFMR. An intramembrane segment occupies 608-610; it reads QGC. Cys610 is lipidated: S-palmitoyl cysteine. The Cytoplasmic portion of the chain corresponds to 611 to 616; it reads DISPRS. The helical transmembrane segment at 617–637 threads the bilayer; the sequence is LSGRIVGGVWWFFTLIIISSY. Residues 638-812 lie on the Extracellular side of the membrane; that stretch reads TANLAAFLTV…EKTSALSLSN (175 aa). The L-glutamate site is built by Ser675 and Thr676. The residue at position 683 (Ser683) is a Phosphoserine; by PKC. Ser717 carries the phosphoserine; by PKG modification. Glu726 is an L-glutamate binding site. The cysteines at positions 739 and 794 are disulfide-linked. A helical transmembrane segment spans residues 813 to 833; it reads VAGVFYILVGGLGLAMLVALI. Over 834–883 the chain is Cytoplasmic; it reads EFCYKSRAEAKRMKVAKNAQNINPSSSQNSQNFATYKEGYNVYGIESVKI. A lipid anchor (S-palmitoyl cysteine) is attached at Cys836. 2 positions are modified to phosphoserine: Ser860 and Ser863. The tract at residues 867 to 877 is required for interaction with IQSEC1; that stretch reads ATYKEGYNVYG. Tyr876 is modified (phosphotyrosine). A Phosphoserine modification is found at Ser880.

The protein belongs to the glutamate-gated ion channel (TC 1.A.10.1) family. GRIA2 subfamily. As to quaternary structure, homotetramer or heterotetramer of pore-forming glutamate receptor subunits. Tetramers may be formed by the dimerization of dimers. May interact with MPP4. Forms a ternary complex with GRIP1 and CSPG4. Interacts with ATAD1 in an ATP-dependent manner. ATAD1-catalyzed ATP hydrolysis disrupts binding to ATAD1 and to GRIP1 and leads to AMPAR complex disassembly. Interacts with GRIP1 and GRIP2. Interacts with NSF via its C-terminus. Isoform 1, but not isoform 3, interacts with PICK1. Interacts with CACNG2. Interacts with GRIA1 and SYNDIG1. Part of a complex containing GRIA2, NSF and NAPA and/or NAPB. Interacts with SNX27 (via PDZ domain); the interaction is required for recycling to the plasma membrane when endocytosed and prevent degradation in lysosomes. Interacts with LRFN1. Found in a complex with GRIA1, GRIA3, GRIA4, CNIH2, CNIH3, CACNG2, CACNG3, CACNG4, CACNG5, CACNG7 and CACNG8. Interacts with CACNG5. Interacts with OLFM2. Interacts with AP4B1, AP4E1 and AP4M1; probably indirect it mediates the somatodendritic localization of GRIA2 in neurons. Forms a complex with GRIP1, NSG1 and STX12; controls the intracellular fate of AMPAR and the endosomal sorting of the GRIA2 subunit toward recycling and membrane targeting. Interacts with IQSEC1; the interaction is required for ARF6 activation. Interacts (heterotetramer form) with CNIH2 and CNIH3; this interaction promotes expression at the plasma membrane and extensively modulates their gating properties by slowing deactivation and desensitization kinetics. Post-translationally, phosphorylation at Tyr-876 is required for interaction with IQSEC1 and ARF6 activation, which in turn triggers AMPAR internalization for persistent synaptic depression. In terms of processing, palmitoylated. Depalmitoylated upon L-glutamate stimulation. ZDHHC3/GODZ specifically palmitoylates Cys-610, which leads to Golgi retention and decreased cell surface expression. In contrast, Cys-836 palmitoylation does not affect cell surface expression but regulates stimulation-dependent endocytosis. N-glycosylated. Post-translationally, ubiquitinated by RNF167, leading to its degradation.

The protein localises to the cell membrane. The protein resides in the postsynaptic cell membrane. It localises to the postsynaptic density membrane. The catalysed reaction is Ca(2+)(in) = Ca(2+)(out). The enzyme catalyses Na(+)(in) = Na(+)(out). Ionotropic glutamate receptor that functions as a ligand-gated cation channel, gated by L-glutamate and glutamatergic agonists such as alpha-amino-3-hydroxy-5-methyl-4-isoxazolepropionic acid (AMPA), quisqualic acid, and kainic acid. L-glutamate acts as an excitatory neurotransmitter at many synapses in the central nervous system and plays an important role in fast excitatory synaptic transmission. Binding of the excitatory neurotransmitter L-glutamate induces a conformation change, leading to the opening of the cation channel, and thereby converts the chemical signal to an electrical impulse upon entry of monovalent and divalent cations such as sodium and calcium. The receptor then desensitizes rapidly and enters in a transient inactive state, characterized by the presence of bound agonist. In the presence of CACNG4 or CACNG7 or CACNG8, shows resensitization which is characterized by a delayed accumulation of current flux upon continued application of L-glutamate. Through complex formation with NSG1, GRIP1 and STX12 controls the intracellular fate of AMPAR and the endosomal sorting of the GRIA2 subunit toward recycling and membrane targeting. In Macaca fascicularis (Crab-eating macaque), this protein is Glutamate receptor 2.